Reading from the N-terminus, the 319-residue chain is Aspartate carbamoyltransferase catalytic subunit (319 aa).

Carbamoyl phosphate contacts are provided by R54 and T55. Residue K82 participates in L-aspartate binding. Carbamoyl phosphate-binding residues include R104, H134, and Q137. R171 and R227 together coordinate L-aspartate. Positions 271 and 272 each coordinate carbamoyl phosphate.

Belongs to the aspartate/ornithine carbamoyltransferase superfamily. ATCase family. Heterododecamer (2C3:3R2) of six catalytic PyrB chains organized as two trimers (C3), and six regulatory PyrI chains organized as three dimers (R2).

The catalysed reaction is carbamoyl phosphate + L-aspartate = N-carbamoyl-L-aspartate + phosphate + H(+). It functions in the pathway pyrimidine metabolism; UMP biosynthesis via de novo pathway; (S)-dihydroorotate from bicarbonate: step 2/3. Functionally, catalyzes the condensation of carbamoyl phosphate and aspartate to form carbamoyl aspartate and inorganic phosphate, the committed step in the de novo pyrimidine nucleotide biosynthesis pathway. This Kineococcus radiotolerans (strain ATCC BAA-149 / DSM 14245 / SRS30216) protein is Aspartate carbamoyltransferase catalytic subunit.